A 239-amino-acid chain; its full sequence is Ribonuclease 3 (239 aa).

An RNase III domain is found at 12-137 (RLTLEAAIGH…LIAALYLDGG (126 aa)). E50 contacts Mg(2+). D54 is an active-site residue. Residues D123 and E126 each coordinate Mg(2+). E126 is an active-site residue. The region spanning 162-231 (DAKTELQEWA…ATRILEREGI (70 aa)) is the DRBM domain.

It belongs to the ribonuclease III family. In terms of assembly, homodimer. Requires Mg(2+) as cofactor.

Its subcellular location is the cytoplasm. The enzyme catalyses Endonucleolytic cleavage to 5'-phosphomonoester.. Its function is as follows. Digests double-stranded RNA. Involved in the processing of primary rRNA transcript to yield the immediate precursors to the large and small rRNAs (23S and 16S). Processes some mRNAs, and tRNAs when they are encoded in the rRNA operon. Processes pre-crRNA and tracrRNA of type II CRISPR loci if present in the organism. The sequence is that of Ribonuclease 3 from Rhizobium rhizogenes (strain K84 / ATCC BAA-868) (Agrobacterium radiobacter).